A 213-amino-acid polypeptide reads, in one-letter code: tRNA (guanine-N(7)-)-methyltransferase (213 aa).

The S-adenosyl-L-methionine site is built by E38, E63, D91, and D113. D113 is an active-site residue. Residues K117, D149, and 192–195 (TEYE) each bind substrate.

The protein belongs to the class I-like SAM-binding methyltransferase superfamily. TrmB family.

The catalysed reaction is guanosine(46) in tRNA + S-adenosyl-L-methionine = N(7)-methylguanosine(46) in tRNA + S-adenosyl-L-homocysteine. It functions in the pathway tRNA modification; N(7)-methylguanine-tRNA biosynthesis. Catalyzes the formation of N(7)-methylguanine at position 46 (m7G46) in tRNA. This Mycoplasmoides gallisepticum (strain R(low / passage 15 / clone 2)) (Mycoplasma gallisepticum) protein is tRNA (guanine-N(7)-)-methyltransferase.